Reading from the N-terminus, the 126-residue chain is Glycine cleavage system H protein (126 aa).

The Lipoyl-binding domain occupies 22–104; that stretch reads TVTIGITEYA…YEKAWMVKVK (83 aa). Lysine 63 bears the N6-lipoyllysine mark.

The protein belongs to the GcvH family. As to quaternary structure, the glycine cleavage system is composed of four proteins: P, T, L and H. (R)-lipoate is required as a cofactor.

Its function is as follows. The glycine cleavage system catalyzes the degradation of glycine. The H protein shuttles the methylamine group of glycine from the P protein to the T protein. In terms of biological role, is also involved in protein lipoylation via its role as an octanoyl/lipoyl carrier protein intermediate. The sequence is that of Glycine cleavage system H protein from Staphylococcus carnosus (strain TM300).